A 105-amino-acid chain; its full sequence is MNARDKKFMTAGIIIALIIAVLAPFLASPNPDGLESTAEKVMPNPETEPVLESPLPDYTLPALGDSPFGGVVSMVIGTILVLAIAYGVGAVFRGRKAAGEEGGEE.

A helical membrane pass occupies residues 8–28 (FMTAGIIIALIIAVLAPFLAS). The disordered stretch occupies residues 32 to 53 (DGLESTAEKVMPNPETEPVLES). Residues 72–92 (VSMVIGTILVLAIAYGVGAVF) traverse the membrane as a helical segment.

The protein to M.jannaschii MJ1570.

It is found in the cell membrane. This is an uncharacterized protein from Methanothermobacter thermautotrophicus (strain ATCC 29096 / DSM 1053 / JCM 10044 / NBRC 100330 / Delta H) (Methanobacterium thermoautotrophicum).